The chain runs to 706 residues: Envelope glycoprotein H (706 aa).

An N-terminal signal peptide occupies residues 1–18 (MQLLCVFCLVLLWEVGAA). Topologically, residues 19–682 (SLSEVKLHLD…LYEERAHVVL (664 aa)) are virion surface. N60 carries an N-linked (GlcNAc...) asparagine; by host glycan. An interaction with gL region spans residues 165-229 (DKFQYTGAMT…QSGDYSLVIV (65 aa)). Residues C278 and C335 are joined by a disulfide bond. An N-linked (GlcNAc...) asparagine; by host glycan is attached at N435. 2 cysteine pairs are disulfide-bonded: C454–C478 and C534–C587. Residues N549 and N604 are each glycosylated (N-linked (GlcNAc...) asparagine; by host). A disulfide bridge connects residues C612 and C615. N-linked (GlcNAc...) asparagine; by host glycosylation occurs at N664. Residues 683-703 (AIILYFIAFALGIFLVHKIVM) form a helical membrane-spanning segment. The Intravirion segment spans residues 704 to 706 (FFL).

It belongs to the herpesviridae glycoprotein H family. In terms of assembly, interacts with glycoprotein L (gL); this interaction is necessary for the correct processing and cell surface expression of gH. The heterodimer gH/gL seems to interact with gB trimers during fusion. The heterodimer gH/gL interacts with host EPHA2 to facilitate virus internalization and fusion. Interacts with glycoprotein 42/BZLF2. N-glycosylated, O-glycosylated, and sialylated.

Its subcellular location is the virion membrane. It is found in the host cell membrane. The protein localises to the host endosome membrane. In terms of biological role, the heterodimer glycoprotein H-glycoprotein L is required for the fusion of viral and plasma membranes leading to virus entry into the host cell. Following initial binding to host receptor, membrane fusion is mediated by the fusion machinery composed of gB and the heterodimer gH/gL. May also be involved in the fusion between the virion envelope and the outer nuclear membrane during virion morphogenesis. The heterodimer gH/gL targets also host EPHA2 to promote viral entry. The chain is Envelope glycoprotein H from Homo sapiens (Human).